The primary structure comprises 406 residues: MIDVKSIILIVLDGLGDRPGEILGYRTPLQAAYHPNMNRMASLGMTGLMHPISPGIRSGSDTSHMSLLGYDPRVYYQGRGPFEALGLHMDMKPGDLAFRANFATNRDGKIIDRRAGRINAGNDQLASAISIDIGNYKFRVKSGVEHRAALVVSGPNLSDKISDSDPHSEGKPPEPIRPLDPSADSTAKIMNEYLKRIREILRDHPVNVEREKNGQIPGNELLIRSAGKVPDIPSFQEKNGITGACVVGSPWLKGLCRLLGMAVIDVPGAAGTINSNYTGKIKTAIDASKRYDFVLVNIKATDVAGHDGDYELKRRVIEDIDIAMEPLLGQSDRIVVAITGDHSTPCSVKDHSGDPVPIVFYTDGIYSDDVKLFDEVSAMKGALRITTQDVLNILMEMAGRAEKFGS.

The segment at 156–183 is disordered; sequence NLSDKISDSDPHSEGKPPEPIRPLDPSA. A compositionally biased stretch (basic and acidic residues) spans 160–174; the sequence is KISDSDPHSEGKPPE.

Belongs to the BPG-independent phosphoglycerate mutase family. A-PGAM subfamily.

It catalyses the reaction (2R)-2-phosphoglycerate = (2R)-3-phosphoglycerate. The protein operates within carbohydrate degradation; glycolysis; pyruvate from D-glyceraldehyde 3-phosphate: step 3/5. Its function is as follows. Catalyzes the interconversion of 2-phosphoglycerate and 3-phosphoglycerate. The protein is 2,3-bisphosphoglycerate-independent phosphoglycerate mutase of Thermoplasma volcanium (strain ATCC 51530 / DSM 4299 / JCM 9571 / NBRC 15438 / GSS1).